Consider the following 478-residue polypeptide: ATP synthase subunit beta (478 aa).

158–165 (GGAGVGKT) is a binding site for ATP.

This sequence belongs to the ATPase alpha/beta chains family. As to quaternary structure, F-type ATPases have 2 components, CF(1) - the catalytic core - and CF(0) - the membrane proton channel. CF(1) has five subunits: alpha(3), beta(3), gamma(1), delta(1), epsilon(1). CF(0) has three main subunits: a(1), b(2) and c(9-12). The alpha and beta chains form an alternating ring which encloses part of the gamma chain. CF(1) is attached to CF(0) by a central stalk formed by the gamma and epsilon chains, while a peripheral stalk is formed by the delta and b chains.

It localises to the cell inner membrane. It carries out the reaction ATP + H2O + 4 H(+)(in) = ADP + phosphate + 5 H(+)(out). Functionally, produces ATP from ADP in the presence of a proton gradient across the membrane. The catalytic sites are hosted primarily by the beta subunits. The protein is ATP synthase subunit beta of Rhizobium leguminosarum bv. trifolii (strain WSM2304).